A 150-amino-acid chain; its full sequence is 3-hydroxyacyl-[acyl-carrier-protein] dehydratase FabZ (150 aa).

The active site involves histidine 51.

The protein belongs to the thioester dehydratase family. FabZ subfamily.

It localises to the cytoplasm. The enzyme catalyses a (3R)-hydroxyacyl-[ACP] = a (2E)-enoyl-[ACP] + H2O. Involved in unsaturated fatty acids biosynthesis. Catalyzes the dehydration of short chain beta-hydroxyacyl-ACPs and long chain saturated and unsaturated beta-hydroxyacyl-ACPs. This Legionella pneumophila (strain Lens) protein is 3-hydroxyacyl-[acyl-carrier-protein] dehydratase FabZ.